The chain runs to 93 residues: Acylphosphatase (93 aa).

The 88-residue stretch at 6-93 (RAHVFISGRV…GEERGFSIIW (88 aa)) folds into the Acylphosphatase-like domain. Residues arginine 21 and asparagine 39 contribute to the active site.

The protein belongs to the acylphosphatase family.

It catalyses the reaction an acyl phosphate + H2O = a carboxylate + phosphate + H(+). The sequence is that of Acylphosphatase (acyP) from Roseiflexus sp. (strain RS-1).